A 634-amino-acid polypeptide reads, in one-letter code: Chaperone protein dnaK2 (634 aa).

Thr197 bears the Phosphothreonine; by autocatalysis mark. Residues 592-634 (IGSSVYQQPGNQPPAPGTPDSNESNDKGGDDDVIDADFTETKD) form a disordered region. A compositionally biased stretch (acidic residues) spans 622–634 (DDVIDADFTETKD).

It belongs to the heat shock protein 70 family.

In terms of biological role, acts as a chaperone. This Prochlorococcus marinus subsp. pastoris (strain CCMP1986 / NIES-2087 / MED4) protein is Chaperone protein dnaK2 (dnaK2).